The following is a 155-amino-acid chain: uncharacterized protein (155 aa).

It belongs to the IIV-6 145L family.

This is an uncharacterized protein from Acheta domesticus (House cricket).